The primary structure comprises 249 residues: MSETTGPSIDRDEVARFERIAATWWDEAGPMRVLHRFNPVRITYIRDTVCRHFGRDPRRPLPLEALSLIDIGCGGGILSEPLARLGATVTGLDPAPTNIRVAQAHAAEAGVPVDYRGQTIEAVVEAGERFDVVLAMEVVEHVVDMPAFVRTACAAVKPGGLFFAATLNRTMRSFALAIVGAEYVLGWLPRGTHDWEKFVTPAELTGAVESAGLTVIDTTGVVYNPLGGRWAMSRDTGVNYMIAAERPVA.

Residues Arg41, Gly72, Asp93, and Met136 each coordinate S-adenosyl-L-methionine.

Belongs to the methyltransferase superfamily. UbiG/COQ3 family.

The catalysed reaction is a 3-demethylubiquinol + S-adenosyl-L-methionine = a ubiquinol + S-adenosyl-L-homocysteine + H(+). It catalyses the reaction a 3-(all-trans-polyprenyl)benzene-1,2-diol + S-adenosyl-L-methionine = a 2-methoxy-6-(all-trans-polyprenyl)phenol + S-adenosyl-L-homocysteine + H(+). The protein operates within cofactor biosynthesis; ubiquinone biosynthesis. Functionally, O-methyltransferase that catalyzes the 2 O-methylation steps in the ubiquinone biosynthetic pathway. This is Ubiquinone biosynthesis O-methyltransferase from Methylobacterium nodulans (strain LMG 21967 / CNCM I-2342 / ORS 2060).